The following is a 149-amino-acid chain: Transcriptional repressor NrdR (149 aa).

Residues 3 to 34 fold into a zinc finger; sequence CPFCSATDTKVIDSRLVAEGHQVRRRRECTEC. The ATP-cone domain maps to 49 to 139; sequence PRVIKRDGTR…VYRAFEDVSE (91 aa).

The protein belongs to the NrdR family. The cofactor is Zn(2+).

In terms of biological role, negatively regulates transcription of bacterial ribonucleotide reductase nrd genes and operons by binding to NrdR-boxes. The sequence is that of Transcriptional repressor NrdR from Shewanella sp. (strain MR-4).